The chain runs to 430 residues: Serine--tRNA ligase (430 aa).

237–239 lines the L-serine pocket; the sequence is TAE. Position 268–270 (268–270) interacts with ATP; it reads RAE. Residue Glu291 coordinates L-serine. An ATP-binding site is contributed by 355-358; it reads EISS. Ser391 is a binding site for L-serine.

It belongs to the class-II aminoacyl-tRNA synthetase family. Type-1 seryl-tRNA synthetase subfamily. Homodimer. The tRNA molecule binds across the dimer.

Its subcellular location is the cytoplasm. It catalyses the reaction tRNA(Ser) + L-serine + ATP = L-seryl-tRNA(Ser) + AMP + diphosphate + H(+). The catalysed reaction is tRNA(Sec) + L-serine + ATP = L-seryl-tRNA(Sec) + AMP + diphosphate + H(+). Its pathway is aminoacyl-tRNA biosynthesis; selenocysteinyl-tRNA(Sec) biosynthesis; L-seryl-tRNA(Sec) from L-serine and tRNA(Sec): step 1/1. In terms of biological role, catalyzes the attachment of serine to tRNA(Ser). Is also able to aminoacylate tRNA(Sec) with serine, to form the misacylated tRNA L-seryl-tRNA(Sec), which will be further converted into selenocysteinyl-tRNA(Sec). The polypeptide is Serine--tRNA ligase (Serratia proteamaculans (strain 568)).